The primary structure comprises 245 residues: tRNA pseudouridine synthase A (245 aa).

Residue aspartate 52 is the Nucleophile of the active site. Tyrosine 111 provides a ligand contact to substrate.

It belongs to the tRNA pseudouridine synthase TruA family. In terms of assembly, homodimer.

The enzyme catalyses uridine(38/39/40) in tRNA = pseudouridine(38/39/40) in tRNA. Formation of pseudouridine at positions 38, 39 and 40 in the anticodon stem and loop of transfer RNAs. This is tRNA pseudouridine synthase A from Zymomonas mobilis subsp. mobilis (strain ATCC 31821 / ZM4 / CP4).